A 353-amino-acid chain; its full sequence is Protein Wnt-11b-2 (353 aa).

A signal peptide spans 1–22 (MALIRHCVTLLLILCCSRLCGA). N31, N38, and N88 each carry an N-linked (GlcNAc...) asparagine glycan. Cystine bridges form between C78–C89, C128–C136, C138–C155, C208–C222, and C210–C217. The O-palmitoleoyl serine; by PORCN moiety is linked to residue S214. Sulfotyrosine occurs at positions 274 and 281. Disulfide bonds link C282–C313, C298–C308, C312–C352, C328–C343, C330–C340, and C335–C336. Residue N299 is glycosylated (N-linked (GlcNAc...) asparagine).

The protein belongs to the Wnt family. Homodimer. Secreted homodimers form a complex with wnt5a homodimers; tyrosine sulfation of both wnt11 and wnt5a by tpst1 is required for this interaction. Interacts with the transmembrane receptor fzd7/fz7. Interacts with lrp6 and ryk. Interacts with tdgf1/frl1. Interacts weakly with frzb1 and strongly with frzb2/crescent. Interaction with frzb2/crescent antagonizes wnt11 function in the neuroectoderm, but enhances it in mesodermal tissue. Post-translationally, glycosylation is required for protein secretion. Palmitoleoylation is required for efficient binding to frizzled receptors. Depalmitoleoylation leads to Wnt signaling pathway inhibition.

It is found in the secreted. It localises to the extracellular space. The protein localises to the extracellular matrix. Ligand for the frizzled7 transmembrane receptor. Primarily acts via non-canonical Wnt pathways mediated by either Ca(2+) and PKC, or by JNK and dvl2/dsh. Depending on the cellular context, can also signal via the canonical Wnt pathway mediated by beta-catenin and dvl2/dsh. May also inhibit canonical Wnt signaling. Maternally initiates dorsal/ventral axis formation by a canonical route, which signals via lrp6. In a complex with wnt5a, activates the canonical and non-canonical processes involved in axis formation. In the non-canonical pathway, acts through fzd7/fz7 to induce phosphorylation of dvl2/dsh. Signals through a non-canonical Wnt pathway to regulate convergent extension movements during gastrulation. Interactions with the secreted Wnt antagonist sfrp5 to coordinate foregut development, acting via a non-canonical wnt pathway whereby sfrp5 restricts wnt11b activity to prevent inappropriate foregut formation. Mediates cardiogenesis via non-canonical Wnt signaling involving JNK-activation and PKC. Acts redundantly with wnt11/wnt11r during pronephros induction. The polypeptide is Protein Wnt-11b-2 (Xenopus tropicalis (Western clawed frog)).